Reading from the N-terminus, the 469-residue chain is Putative dipeptidase SAUSA300_1697 (469 aa).

Residue H84 participates in Zn(2+) binding. D86 is a catalytic residue. D115 contributes to the Zn(2+) binding site. The Proton acceptor role is filled by E149. 3 residues coordinate Zn(2+): E150, D173, and H440.

This sequence belongs to the peptidase M20A family. Zn(2+) is required as a cofactor.

The protein is Putative dipeptidase SAUSA300_1697 of Staphylococcus aureus (strain USA300).